Here is a 426-residue protein sequence, read N- to C-terminus: Serine--tRNA ligase (426 aa).

231-233 (TAE) contributes to the L-serine binding site. 262 to 264 (RSE) contacts ATP. Glutamate 285 contacts L-serine. 349-352 (EISS) contributes to the ATP binding site. Serine 385 contributes to the L-serine binding site.

Belongs to the class-II aminoacyl-tRNA synthetase family. Type-1 seryl-tRNA synthetase subfamily. As to quaternary structure, homodimer. The tRNA molecule binds across the dimer.

The protein localises to the cytoplasm. The enzyme catalyses tRNA(Ser) + L-serine + ATP = L-seryl-tRNA(Ser) + AMP + diphosphate + H(+). The catalysed reaction is tRNA(Sec) + L-serine + ATP = L-seryl-tRNA(Sec) + AMP + diphosphate + H(+). It functions in the pathway aminoacyl-tRNA biosynthesis; selenocysteinyl-tRNA(Sec) biosynthesis; L-seryl-tRNA(Sec) from L-serine and tRNA(Sec): step 1/1. In terms of biological role, catalyzes the attachment of serine to tRNA(Ser). Is also able to aminoacylate tRNA(Sec) with serine, to form the misacylated tRNA L-seryl-tRNA(Sec), which will be further converted into selenocysteinyl-tRNA(Sec). The polypeptide is Serine--tRNA ligase (Teredinibacter turnerae (strain ATCC 39867 / T7901)).